A 178-amino-acid chain; its full sequence is MKRERSDFEESLKNIDIAKCLMILAQTSMVKQIGLNQHTESHTSNQFECKTCNKRFSSFQALGGHRASHKKPKLTVEQKDVKHLSNDYKGNHFHKCSICSQSFGTGQALGGHMRRHRSSMTVEPSFISPMIPSMPVLKRCGSSKRILSLDLNLTPLENDLEYIFGKTFVPKIDMKFVL.

2 C2H2-type zinc fingers span residues 47–69 (FECK…RASH) and 94–116 (HKCS…MRRH).

In terms of tissue distribution, expressed in leaves.

Its subcellular location is the nucleus. Probable transcription factor that may be involved in stress responses. In Arabidopsis thaliana (Mouse-ear cress), this protein is Zinc finger protein ZAT11 (ZAT11).